Reading from the N-terminus, the 78-residue chain is Mambalgin-1 (78 aa).

The first 21 residues, 1–21 (MKTLLLTLLVVTIVCLDLGYS), serve as a signal peptide directing secretion. Disulfide bonds link C24-C40, C33-C58, C62-C70, and C71-C76.

The protein belongs to the three-finger toxin family. Short-chain subfamily. Mambalgin sub-subfamily. Expressed by the venom gland.

The protein localises to the secreted. This three-finger toxin inhibits ASIC channels. It acts as a gating modifier toxin by decreasing the apparent proton sensitivity of activation and by slightly increasing the apparent proton sensitivity for inactivation. It binds more tightly to the closed state and to a much lesser extent the inactivated/desensitized state of ASIC1a isoform of ASIC1. It interacts directly with the outside surface of the thumb domain of chicken ASIC1a (ASIC1a), but does not insert into the acidic pocket as suggested for mambalgin-2. This binding leads to relocation of the thumb domain that could disrupt the acidic pocket of cASIC1a. It reversibly inhibits rat ASIC1a (IC(50)=3.4-55 nM), rat ASIC1a-ASIC2b (IC(50)=61 nM), rat ASIC1a-ASIC1b (IC(50)=72 nM), human ASIC1a (IC(50)=127-580 nM), chicken ASIC1a (IC(50)=123.6 nM), rat ASIC1b (IC(50)=22.2-203 nM), rat ASIC1a-ASIC2a (IC(50)=152-252 nM). In vivo, it shows a potent naloxone-resistant analgesic effect against acute and inflammatory pain upon central and peripheral injection. In addition, it also has an opioid-independent effect on both thermal and mechanical inflammatory pain after systemic administration and is effective against neuropathic pain. The polypeptide is Mambalgin-1 (Dendroaspis polylepis polylepis (Black mamba)).